A 72-amino-acid polypeptide reads, in one-letter code: Gas vesicle protein A (72 aa).

The protein belongs to the gas vesicle GvpA family. As to quaternary structure, the gas vesicle shell is 2 nm thick and consists of a single layer of this protein. It forms helical ribs nearly perpendicular to the long axis of the vesicle.

It localises to the gas vesicle shell. Functionally, gas vesicles are hollow, gas filled proteinaceous nanostructures found in some microorganisms. During planktonic growth they allow positioning of the organism at a favorable depth for light or nutrient acquisition. GvpA forms the protein shell. The protein is Gas vesicle protein A of Geotalea uraniireducens (strain Rf4) (Geobacter uraniireducens).